The sequence spans 7785 residues: Probable non-canonical nonribosomal peptide synthetase (NRPS) CymA (7785 aa).

Carrier domains follow at residues 487 to 562 (TARS…QRQE), 1908 to 1983 (HART…SEQQ), and 2958 to 3033 (SPGM…LEGG). Residues S522, S1943, and S2993 each carry the O-(pantetheine 4'-phosphoryl)serine modification. Residues 3088–3111 (RLALADVVVRHEALRTVFAERAGN) form an LRR 1 repeat. 3 consecutive Carrier domains span residues 3978–4053 (APRT…SEQQ), 5002–5077 (EPRT…LEAN), and 6389–6464 (GPRD…AQGS). O-(pantetheine 4'-phosphoryl)serine is present on residues S4013, S5037, and S6424. An LRR 2 repeat occupies 6853 to 6875 (TGVSRVDLSVNAIETFDDHGLPA). A Carrier 7 domain is found at 7432–7507 (GPRTPQEEIL…QLAEQLGSDG (76 aa)). S7467 is modified (O-(pantetheine 4'-phosphoryl)serine).

The cofactor is pantetheine 4'-phosphate.

In terms of biological role, probable non-canonical nonribosomal peptide synthetase (NRPS); part of the gene cluster that mediates the biosynthesis of cyclic heptapeptides, known as cyclomarins and also of cyclic dipeptides, called cyclomarazines, which have both antimicrobial and cytotoxic effects. First, CymD catalyzes the reverse N-prenylation of monomeric L-tryptophan with dimethylallyl diphosphate (DMAPP) to form N-(1,1-dimethylallyl)-tryptophan (r-N-DMAT). The N-(1,1-dimethylallyl)-tryptophan produced by CymD is then combined with a range of standard and nonproteinogenic amino acid substrates to synthesize the peptides, a process that is probably catalyzed by the non-canonical nonribosomal peptide synthetase (NRPS), CymA. Other proteins in the cluster catalyze further modifications of the peptides including CymV which catalyzes the oxidation of olefinic cyclomarins and cyclomarazines to their respective epoxide derivatives. This is Probable non-canonical nonribosomal peptide synthetase (NRPS) CymA from Salinispora arenicola (strain CNS-205).